Here is a 148-residue protein sequence, read N- to C-terminus: Leghemoglobin 29 (148 aa).

In terms of domain architecture, Globin spans 2–148; sequence EFTLRQEALV…LAVAIMKEMS (147 aa). Position 30 is a nitrated tyrosine (Y30). S45 provides a ligand contact to heme b. S45 bears the Phosphoserine mark. H63 contributes to the O2 binding site. Heme b is bound by residues H95 and K98. Position 136 is a nitrated tyrosine (Y136).

Belongs to the plant globin family. In terms of assembly, monomer. Nitrated in effective nodules and particularly in hypoxic conditions; this mechanism may play a protective role in the symbiosis by buffering toxic peroxynitrite NO(2)(-). Nitration level decrease during nodule senescence. Post-translationally, phosphorylation at Ser-45 disrupts the molecular environment of its porphyrin ring oxygen binding pocket, thus leading to a reduced oxygen consumption and to the delivery of oxygen O(2) to symbiosomes. Accumulates in root nodules after inoculation by bacteria of the genus Rhizobium. Expressed in mycorrhizal roots in the presence of the mycorrhizal fungus Glomus fasciculatum.

Its subcellular location is the cytoplasm. The protein resides in the cytosol. It is found in the nucleus. Functionally, leghemoglobin that reversibly binds oxygen O(2) through a pentacoordinated heme iron. In root nodules, facilitates the diffusion of oxygen to the bacteroids while preventing the bacterial nitrogenase from being inactivated by buffering dioxygen, nitric oxide and carbon monoxide, and promoting the formation of reactive oxygen species (ROS, e.g. H(2)O(2)). This role is essential for symbiotic nitrogen fixation (SNF). The polypeptide is Leghemoglobin 29 (Vicia faba (Broad bean)).